The sequence spans 111 residues: Large ribosomal subunit protein uL22 (111 aa).

The protein belongs to the universal ribosomal protein uL22 family. In terms of assembly, part of the 50S ribosomal subunit.

This protein binds specifically to 23S rRNA; its binding is stimulated by other ribosomal proteins, e.g. L4, L17, and L20. It is important during the early stages of 50S assembly. It makes multiple contacts with different domains of the 23S rRNA in the assembled 50S subunit and ribosome. Functionally, the globular domain of the protein is located near the polypeptide exit tunnel on the outside of the subunit, while an extended beta-hairpin is found that lines the wall of the exit tunnel in the center of the 70S ribosome. In Clostridium acetobutylicum (strain ATCC 824 / DSM 792 / JCM 1419 / IAM 19013 / LMG 5710 / NBRC 13948 / NRRL B-527 / VKM B-1787 / 2291 / W), this protein is Large ribosomal subunit protein uL22.